A 456-amino-acid chain; its full sequence is Putative dihydroorotase (456 aa).

It belongs to the metallo-dependent hydrolases superfamily. DHOase family. Class I DHOase subfamily.

It carries out the reaction (S)-dihydroorotate + H2O = N-carbamoyl-L-aspartate + H(+). Its pathway is pyrimidine metabolism; UMP biosynthesis via de novo pathway; (S)-dihydroorotate from bicarbonate: step 3/3. Its function is as follows. Catalyzes the reversible cyclization of carbamoyl aspartate to dihydroorotate. The polypeptide is Putative dihydroorotase (Rhodopirellula baltica (strain DSM 10527 / NCIMB 13988 / SH1)).